We begin with the raw amino-acid sequence, 154 residues long: 3-hydroxyacyl-[acyl-carrier-protein] dehydratase FabZ (154 aa).

Residue H54 is part of the active site.

The protein belongs to the thioester dehydratase family. FabZ subfamily.

It is found in the cytoplasm. The catalysed reaction is a (3R)-hydroxyacyl-[ACP] = a (2E)-enoyl-[ACP] + H2O. In terms of biological role, involved in unsaturated fatty acids biosynthesis. Catalyzes the dehydration of short chain beta-hydroxyacyl-ACPs and long chain saturated and unsaturated beta-hydroxyacyl-ACPs. The protein is 3-hydroxyacyl-[acyl-carrier-protein] dehydratase FabZ of Chlamydia abortus (strain DSM 27085 / S26/3) (Chlamydophila abortus).